A 260-amino-acid polypeptide reads, in one-letter code: Ribosomal protein L11 methyltransferase (260 aa).

S-adenosyl-L-methionine-binding residues include T119, G140, D162, and N203.

This sequence belongs to the methyltransferase superfamily. PrmA family.

It localises to the cytoplasm. The catalysed reaction is L-lysyl-[protein] + 3 S-adenosyl-L-methionine = N(6),N(6),N(6)-trimethyl-L-lysyl-[protein] + 3 S-adenosyl-L-homocysteine + 3 H(+). Functionally, methylates ribosomal protein L11. The protein is Ribosomal protein L11 methyltransferase of Thermosipho africanus (strain TCF52B).